The primary structure comprises 346 residues: Cobalt transport protein CbiM (346 aa).

The signal sequence occupies residues 1–25; sequence MKRITLYAAGSAIIGAMLLAGPAHA. Transmembrane regions (helical) follow at residues 31–51, 68–88, 101–121, 133–153, 159–179, 196–216, 255–275, and 312–332; these read GILPLGWAALWFAVAAPFLAL, PLVGLMAAVVFIISCMPIPVP, IAAILVGPLVSVVITTVALLI, TLGADVVSMGVAGSFAGWFVF, LGAGLAVAAFVAGLLADWATY, FYPLFLKIVAAFVPTQLPLGV, ATVVMLALFCLLASLLVAGPS, and LLLFVFLLAGTVGGFAAGYFW.

The protein belongs to the CbiM family. In terms of assembly, forms an energy-coupling factor (ECF) transporter complex composed of an ATP-binding protein (A component, CbiO), a transmembrane protein (T component, CbiQ) and 2 possible substrate-capture proteins (S components, CbiM and CbiN) of unknown stoichimetry.

The protein localises to the cell inner membrane. The protein operates within cofactor biosynthesis; adenosylcobalamin biosynthesis. In terms of biological role, part of the energy-coupling factor (ECF) transporter complex CbiMNOQ involved in cobalt import. The polypeptide is Cobalt transport protein CbiM (Geobacter sulfurreducens (strain ATCC 51573 / DSM 12127 / PCA)).